Consider the following 505-residue polypeptide: MTQTTAQRPVRTRIAPSPTGFPHVGTAYIALFNLAFAKAHGGEFILRIEDTDQSRSTEQSEQMILDALRWVGLDWAEGPDNGGPHAPYRQSERSEIYKQYAQELLDKGHAFRCFCTPEELDAMRAEQIARGENPHYDGRYANLPREESDKMAAEGKPFVIRMKVPTEGVCKVQDMLRGEVEIPWEQVDMQVLLKTDGLPTYHLANVVDDHLMEITHVIRGEEWLNSAPKHQLLYDYFGWEMPVLCHMPLLRNPDKSKLSKRKNPTSITYYRDAGVLPEALLNYLGRMGYSMPDDKEIFTLDEMIESFDITRVSLGGPIFDLEKLHWLNGEWLRALTPEQLKNKILDWANDSDKLTAIAAAIQPRIHLLSDAVNWGGFYFQNLPSITAESFEHKTLTPEQIMEILQIATWKLEALPEWSEDNIFKTLKGLSAALDIKLRDMMAPFFIAIAGSTSSTPVMNSMYVIGADMTLTRLRHAVEVLGGIGKKKLKKLEKTAADMPDFLAAE.

A 'HIGH' region motif is present at residues 16 to 26; the sequence is PSPTGFPHVGT. The short motif at 257–261 is the 'KMSKS' region element; the sequence is KLSKR. Lys-260 serves as a coordination point for ATP.

This sequence belongs to the class-I aminoacyl-tRNA synthetase family. Glutamate--tRNA ligase type 1 subfamily. As to quaternary structure, monomer.

It is found in the cytoplasm. It catalyses the reaction tRNA(Glu) + L-glutamate + ATP = L-glutamyl-tRNA(Glu) + AMP + diphosphate. Its function is as follows. Catalyzes the attachment of glutamate to tRNA(Glu) in a two-step reaction: glutamate is first activated by ATP to form Glu-AMP and then transferred to the acceptor end of tRNA(Glu). The sequence is that of Glutamate--tRNA ligase from Psychrobacter sp. (strain PRwf-1).